A 310-amino-acid chain; its full sequence is Homoserine kinase (310 aa).

91–101 contacts ATP; that stretch reads PIGSGLGSSAC.

It belongs to the GHMP kinase family. Homoserine kinase subfamily.

The protein localises to the cytoplasm. The enzyme catalyses L-homoserine + ATP = O-phospho-L-homoserine + ADP + H(+). Its pathway is amino-acid biosynthesis; L-threonine biosynthesis; L-threonine from L-aspartate: step 4/5. Functionally, catalyzes the ATP-dependent phosphorylation of L-homoserine to L-homoserine phosphate. This chain is Homoserine kinase, found in Escherichia coli O6:H1 (strain CFT073 / ATCC 700928 / UPEC).